The primary structure comprises 293 residues: 4-hydroxy-tetrahydrodipicolinate synthase (293 aa).

Threonine 45 serves as a coordination point for pyruvate. The Proton donor/acceptor role is filled by tyrosine 133. Catalysis depends on lysine 161, which acts as the Schiff-base intermediate with substrate. Isoleucine 203 contributes to the pyruvate binding site.

Belongs to the DapA family. In terms of assembly, homotetramer; dimer of dimers.

It is found in the cytoplasm. The enzyme catalyses L-aspartate 4-semialdehyde + pyruvate = (2S,4S)-4-hydroxy-2,3,4,5-tetrahydrodipicolinate + H2O + H(+). Its pathway is amino-acid biosynthesis; L-lysine biosynthesis via DAP pathway; (S)-tetrahydrodipicolinate from L-aspartate: step 3/4. In terms of biological role, catalyzes the condensation of (S)-aspartate-beta-semialdehyde [(S)-ASA] and pyruvate to 4-hydroxy-tetrahydrodipicolinate (HTPA). The chain is 4-hydroxy-tetrahydrodipicolinate synthase from Syntrophotalea carbinolica (strain DSM 2380 / NBRC 103641 / GraBd1) (Pelobacter carbinolicus).